Consider the following 190-residue polypeptide: Thioredoxin F-type, chloroplastic (190 aa).

The segment at 1–31 (MALHLSLSHQSWTSPAHPITSSDPTRSSVPG) is disordered. A chloroplast-targeting transit peptide spans 1 to 77 (MALHLSLSHQ…SMEQALGTQE (77 aa)). Positions 7 to 30 (LSHQSWTSPAHPITSSDPTRSSVP) are enriched in polar residues. Residues 78–189 (MEAIVGKVTE…LLEAIQAARS (112 aa)) form the Thioredoxin domain. Catalysis depends on nucleophile residues Cys-114 and Cys-117. An intrachain disulfide couples Cys-114 to Cys-117.

This sequence belongs to the thioredoxin family. Plant F-type subfamily. Forms a complex with heterodimeric ferredoxin-thioredoxin reductase (FTR) and ferredoxin.

It localises to the plastid. The protein resides in the chloroplast. Participates in various redox reactions through the reversible oxidation of the active center dithiol to a disulfide. The F form is known to activate a number of enzymes of the photosynthetic carbon cycle. In Spinacia oleracea (Spinach), this protein is Thioredoxin F-type, chloroplastic.